The chain runs to 238 residues: Ribonuclease PH (238 aa).

Residues Arg86 and 124–126 (GTR) contribute to the phosphate site.

This sequence belongs to the RNase PH family. Homohexameric ring arranged as a trimer of dimers.

The catalysed reaction is tRNA(n+1) + phosphate = tRNA(n) + a ribonucleoside 5'-diphosphate. Functionally, phosphorolytic 3'-5' exoribonuclease that plays an important role in tRNA 3'-end maturation. Removes nucleotide residues following the 3'-CCA terminus of tRNAs; can also add nucleotides to the ends of RNA molecules by using nucleoside diphosphates as substrates, but this may not be physiologically important. Probably plays a role in initiation of 16S rRNA degradation (leading to ribosome degradation) during starvation. The sequence is that of Ribonuclease PH from Vibrio atlanticus (strain LGP32) (Vibrio splendidus (strain Mel32)).